An 89-amino-acid chain; its full sequence is Small ribosomal subunit protein uS15 (89 aa).

It belongs to the universal ribosomal protein uS15 family. As to quaternary structure, part of the 30S ribosomal subunit. Forms a bridge to the 50S subunit in the 70S ribosome, contacting the 23S rRNA.

Functionally, one of the primary rRNA binding proteins, it binds directly to 16S rRNA where it helps nucleate assembly of the platform of the 30S subunit by binding and bridging several RNA helices of the 16S rRNA. In terms of biological role, forms an intersubunit bridge (bridge B4) with the 23S rRNA of the 50S subunit in the ribosome. The polypeptide is Small ribosomal subunit protein uS15 (Corynebacterium efficiens (strain DSM 44549 / YS-314 / AJ 12310 / JCM 11189 / NBRC 100395)).